Here is a 274-residue protein sequence, read N- to C-terminus: 3-methyl-2-oxobutanoate hydroxymethyltransferase (274 aa).

Mg(2+) is bound by residues Asp49 and Asp88. Residues 49 to 50 (DS), Asp88, and Lys118 each bind 3-methyl-2-oxobutanoate. Glu120 is a Mg(2+) binding site. Glu187 acts as the Proton acceptor in catalysis.

Belongs to the PanB family. As to quaternary structure, homodecamer; pentamer of dimers. Requires Mg(2+) as cofactor.

Its subcellular location is the cytoplasm. It catalyses the reaction 3-methyl-2-oxobutanoate + (6R)-5,10-methylene-5,6,7,8-tetrahydrofolate + H2O = 2-dehydropantoate + (6S)-5,6,7,8-tetrahydrofolate. Its pathway is cofactor biosynthesis; (R)-pantothenate biosynthesis; (R)-pantoate from 3-methyl-2-oxobutanoate: step 1/2. Catalyzes the reversible reaction in which hydroxymethyl group from 5,10-methylenetetrahydrofolate is transferred onto alpha-ketoisovalerate to form ketopantoate. This is 3-methyl-2-oxobutanoate hydroxymethyltransferase from Rhodopseudomonas palustris (strain ATCC BAA-98 / CGA009).